Here is a 471-residue protein sequence, read N- to C-terminus: Alpha-galactosidase (471 aa).

A signal peptide spans 1-18 (MFLLYLFTSFAAVSGVLG). An intrachain disulfide couples C42 to C74. Substrate is bound by residues D72 and D73. An N-linked (GlcNAc...) asparagine glycan is attached at N82. Residues C121 and C151 are joined by a disulfide bond. K147 is a binding site for substrate. Catalysis depends on D149, which acts as the Nucleophile. The N-linked (GlcNAc...) asparagine glycan is linked to N175. A substrate-binding site is contributed by R205. Catalysis depends on D209, which acts as the Proton donor. Cystine bridges form between C221–C237 and C223–C230. Q251 is a substrate binding site. Residues N270, N403, N412, N417, N422, N435, and N454 are each glycosylated (N-linked (GlcNAc...) asparagine).

Belongs to the glycosyl hydrolase 27 family. As to quaternary structure, homotetramer.

The protein localises to the secreted. The enzyme catalyses Hydrolysis of terminal, non-reducing alpha-D-galactose residues in alpha-D-galactosides, including galactose oligosaccharides, galactomannans and galactolipids.. This chain is Alpha-galactosidase (MEL), found in Saccharomyces pastorianus (strain ATCC 76529 / Carlsberg bottom yeast no.1 / CBS 1513 / CLIB 176 / NBRC 1167 / NCYC 396 / NRRL Y-12693) (Saaz-type lager yeast).